The following is a 101-amino-acid chain: UPF0213 protein lp_2058 (101 aa).

The region spanning 15-92 (KKYYFYVLLC…KHQSRAAKLK (78 aa)) is the GIY-YIG domain.

This sequence belongs to the UPF0213 family.

The polypeptide is UPF0213 protein lp_2058 (Lactiplantibacillus plantarum (strain ATCC BAA-793 / NCIMB 8826 / WCFS1) (Lactobacillus plantarum)).